Here is a 551-residue protein sequence, read N- to C-terminus: Putative transport protein CGSHiEE_03135 (551 aa).

5 consecutive transmembrane segments (helical) span residues 4–24 (IAIT…IGHW), 28–48 (GVGL…HFTD), 65–85 (FGLI…FFSS), 95–115 (AFAI…HKIA), and 157–177 (VSYA…MWLI). RCK C-terminal domains are found at residues 191–275 (RFNA…IIGY) and 277–360 (VDAP…VIGN). Transmembrane regions (helical) follow at residues 370-390 (MLPV…PFYI), 402-424 (AGGP…LYWF), 438-458 (IVLF…DTLV), 463-483 (LEWM…AGTI), 492-512 (YLTI…LAFA), and 529-549 (VYPL…VLLW).

Belongs to the AAE transporter (TC 2.A.81) family. YidE subfamily.

It localises to the cell membrane. This chain is Putative transport protein CGSHiEE_03135, found in Haemophilus influenzae (strain PittEE).